A 141-amino-acid chain; its full sequence is Nucleoside diphosphate kinase (141 aa).

ATP-binding residues include Lys11, Phe59, Arg87, Thr93, Arg104, and Asn114. His117 functions as the Pros-phosphohistidine intermediate in the catalytic mechanism.

It belongs to the NDK family. As to quaternary structure, homotetramer. Mg(2+) is required as a cofactor.

It localises to the cytoplasm. It catalyses the reaction a 2'-deoxyribonucleoside 5'-diphosphate + ATP = a 2'-deoxyribonucleoside 5'-triphosphate + ADP. The enzyme catalyses a ribonucleoside 5'-diphosphate + ATP = a ribonucleoside 5'-triphosphate + ADP. Major role in the synthesis of nucleoside triphosphates other than ATP. The ATP gamma phosphate is transferred to the NDP beta phosphate via a ping-pong mechanism, using a phosphorylated active-site intermediate. This is Nucleoside diphosphate kinase from Vibrio campbellii (strain ATCC BAA-1116).